A 32-amino-acid polypeptide reads, in one-letter code: MSDINATRLPGMEPPSPMPCVGDADNFTLTRG.

Positions 1 to 10 (MSDINATRLP) are excised as a propeptide. Residues 1 to 32 (MSDINATRLPGMEPPSPMPCVGDADNFTLTRG) are disordered. Positions 11–19 (GMEPPSPMP) form a cross-link, cyclopeptide (Gly-Pro). Positions 20 to 32 (CVGDADNFTLTRG) are excised as a propeptide.

The protein belongs to the MSDIN fungal toxin family. Processed by the macrocyclase-peptidase enzyme POPB to yield a toxic cyclic nonapeptide. POPB first removes 10 residues from the N-terminus. Conformational trapping of the remaining peptide forces the enzyme to release this intermediate rather than proceed to macrocyclization. The enzyme rebinds the remaining peptide in a different conformation and catalyzes macrocyclization of the N-terminal 9 residues.

Probable toxin that belongs to the MSDIN-like toxin family responsible for a large number of food poisoning cases and deaths. This chain is MSDIN-like toxin proprotein 11, found in Amanita bisporigera (Destroying angel).